A 177-amino-acid polypeptide reads, in one-letter code: MSRIAKYPVELPKGVEANIQQDQITVKGPLGTLSQALTGDVTVALDNGKLTFVAANESRHAGAMSGTVRALVANMVTGVSKGFERKLTLVGVGYRAQVQGDAVKLQLGFSHDIVHKLPAGVKAECPTQTEIVIKGSNKQVVGQVAAELRAYREPEPYKGKGVRYADERVVIKETKKK.

The protein belongs to the universal ribosomal protein uL6 family. In terms of assembly, part of the 50S ribosomal subunit.

In terms of biological role, this protein binds to the 23S rRNA, and is important in its secondary structure. It is located near the subunit interface in the base of the L7/L12 stalk, and near the tRNA binding site of the peptidyltransferase center. The protein is Large ribosomal subunit protein uL6 of Bordetella petrii (strain ATCC BAA-461 / DSM 12804 / CCUG 43448).